Consider the following 247-residue polypeptide: Probable 2-phosphosulfolactate phosphatase (247 aa).

It belongs to the ComB family. It depends on Mg(2+) as a cofactor.

The enzyme catalyses (2R)-O-phospho-3-sulfolactate + H2O = (2R)-3-sulfolactate + phosphate. The sequence is that of Probable 2-phosphosulfolactate phosphatase from Clostridium perfringens (strain SM101 / Type A).